Consider the following 496-residue polypeptide: Probable cytosol aminopeptidase (496 aa).

Lysine 268 and aspartate 273 together coordinate Mn(2+). Lysine 280 is a catalytic residue. 3 residues coordinate Mn(2+): aspartate 291, aspartate 350, and glutamate 352. The active site involves arginine 354.

It belongs to the peptidase M17 family. Requires Mn(2+) as cofactor.

Its subcellular location is the cytoplasm. The catalysed reaction is Release of an N-terminal amino acid, Xaa-|-Yaa-, in which Xaa is preferably Leu, but may be other amino acids including Pro although not Arg or Lys, and Yaa may be Pro. Amino acid amides and methyl esters are also readily hydrolyzed, but rates on arylamides are exceedingly low.. It catalyses the reaction Release of an N-terminal amino acid, preferentially leucine, but not glutamic or aspartic acids.. In terms of biological role, presumably involved in the processing and regular turnover of intracellular proteins. Catalyzes the removal of unsubstituted N-terminal amino acids from various peptides. The protein is Probable cytosol aminopeptidase of Thioalkalivibrio sulfidiphilus (strain HL-EbGR7).